The chain runs to 1088 residues: RNA-directed RNA polymerase (1088 aa).

One can recognise a RdRp catalytic domain in the interval 501 to 687; the sequence is LSYGDVTRFL…AKRYIAGGKI (187 aa).

It belongs to the reoviridae RNA-directed RNA polymerase family. As to quaternary structure, interacts with VP3 (Potential). Interacts with VP2; this interaction activates VP1. Interacts with NSP5; this interaction is probably necessary for the formation of functional virus factories. Interacts with NSP2; this interaction is weak. Requires Mg(2+) as cofactor.

Its subcellular location is the virion. The catalysed reaction is RNA(n) + a ribonucleoside 5'-triphosphate = RNA(n+1) + diphosphate. Functionally, RNA-directed RNA polymerase that is involved in both transcription and genome replication. Together with VP3 capping enzyme, forms an enzyme complex positioned near the channels situated at each of the five-fold vertices of the core. Following infection, the outermost layer of the virus is lost, leaving a double-layered particle (DLP) made up of the core and VP6 shell. VP1 then catalyzes the transcription of fully conservative plus-strand genomic RNAs that are extruded through the DLP's channels into the cytoplasm where they function as mRNAs for translation of viral proteins. One copy of each of the viral (+)RNAs is also recruited during core assembly, together with newly synthesized polymerase complexes and VP2. The polymerase of these novo-formed particles catalyzes the synthesis of complementary minus-strands leading to dsRNA formation. To do so, the polymerase specifically recognizes and binds 4 bases 5'-UGUG-3' in the conserved 3'-sequence of plus-strand RNA templates. VP2 presumably activates the autoinhibited VP1-RNA complex to coordinate packaging and genome replication. Once dsRNA synthesis is complete, the polymerase switches to the transcriptional mode, thus providing secondary transcription. The chain is RNA-directed RNA polymerase from Bos taurus (Bovine).